The primary structure comprises 586 residues: Proteasome-associated ATPase (586 aa).

The stretch at 11–76 forms a coiled coil; it reads AWRELEAVRA…LREEVDRLGQ (66 aa). Position 273–278 (273–278) interacts with ATP; sequence GCGKTL. Residues 585-586 are docks into pockets in the proteasome alpha-ring; sequence YL.

This sequence belongs to the AAA ATPase family. As to quaternary structure, homohexamer. Assembles into a hexameric ring structure that caps the 20S proteasome core. Strongly interacts with the prokaryotic ubiquitin-like protein Pup through a hydrophobic interface; the interacting region of ARC lies in its N-terminal coiled-coil domain. There is one Pup binding site per ARC hexamer ring. Upon ATP-binding, the C-terminus of ARC interacts with the alpha-rings of the proteasome core, possibly by binding to the intersubunit pockets.

The protein operates within protein degradation; proteasomal Pup-dependent pathway. ATPase which is responsible for recognizing, binding, unfolding and translocation of pupylated proteins into the bacterial 20S proteasome core particle. May be essential for opening the gate of the 20S proteasome via an interaction with its C-terminus, thereby allowing substrate entry and access to the site of proteolysis. Thus, the C-termini of the proteasomal ATPase may function like a 'key in a lock' to induce gate opening and therefore regulate proteolysis. This chain is Proteasome-associated ATPase, found in Nocardia farcinica (strain IFM 10152).